Here is a 178-residue protein sequence, read N- to C-terminus: Large ribosomal subunit protein uL6 (178 aa).

The protein belongs to the universal ribosomal protein uL6 family. As to quaternary structure, part of the 50S ribosomal subunit.

In terms of biological role, this protein binds to the 23S rRNA, and is important in its secondary structure. It is located near the subunit interface in the base of the L7/L12 stalk, and near the tRNA binding site of the peptidyltransferase center. The protein is Large ribosomal subunit protein uL6 of Corynebacterium diphtheriae (strain ATCC 700971 / NCTC 13129 / Biotype gravis).